The sequence spans 170 residues: Large ribosomal subunit protein uL11 (170 aa).

Belongs to the universal ribosomal protein uL11 family. As to quaternary structure, part of the ribosomal stalk of the 50S ribosomal subunit. Interacts with L10 and the large rRNA to form the base of the stalk. L10 forms an elongated spine to which L12 dimers bind in a sequential fashion forming a multimeric L10(L12)X complex.

Its function is as follows. Forms part of the ribosomal stalk which helps the ribosome interact with GTP-bound translation factors. The sequence is that of Large ribosomal subunit protein uL11 from Saccharolobus islandicus (strain Y.N.15.51 / Yellowstone #2) (Sulfolobus islandicus).